Reading from the N-terminus, the 334-residue chain is Nucleoid-associated protein SG1574 (334 aa).

The protein belongs to the YejK family.

The protein resides in the cytoplasm. Its subcellular location is the nucleoid. This chain is Nucleoid-associated protein SG1574, found in Sodalis glossinidius (strain morsitans).